The following is a 544-amino-acid chain: uncharacterized protein (544 aa).

12 consecutive transmembrane segments (helical) span residues Phe-41 to Ala-61, Ala-71 to Ala-91, Gly-106 to Leu-126, Tyr-166 to Pro-186, Trp-196 to Ala-216, Trp-240 to Tyr-260, Ala-280 to Ala-300, Val-332 to Ala-352, Val-391 to Phe-411, Val-413 to Val-433, Ile-451 to Gln-471, and Trp-484 to Ala-504.

The protein belongs to the amino acid-polyamine-organocation (APC) superfamily.

Its subcellular location is the membrane. This is an uncharacterized protein from Schizosaccharomyces pombe (strain 972 / ATCC 24843) (Fission yeast).